The following is a 209-amino-acid chain: MGSVSNQQFAGGCAKAAEKAPEEAPPDAARAADEPQLLHGAGICKWFNVRMGFGFLSMTARAGVALDPPVDVFVHQSKLHMEGFRSLKEGEAVEFTFKKSAKGLESIRVTGPGGVFCIGSERRPKGKNMQKRRSKGDRCYNCGGLDHHAKECKLPPQPKKCHFCQSINHMVASCPLKAQQGPSSQGKPAYFREEEEEIHSPALLPEAQN.

The disordered stretch occupies residues 1 to 31 (MGSVSNQQFAGGCAKAAEKAPEEAPPDAARA). The residue at position 2 (G2) is an N-acetylglycine. S3 carries the phosphoserine modification. Residues 39–112 (HGAGICKWFN…GLESIRVTGP (74 aa)) form the CSD domain. Residues 113–136 (GGVFCIGSERRPKGKNMQKRRSKG) are flexible linker. The residue at position 120 (S120) is a Phosphoserine. 2 consecutive CCHC-type zinc fingers follow at residues 137–154 (DRCYNCGGLDHHAKECKL) and 159–176 (KKCHFCQSINHMVASCPL). The interval 177–209 (KAQQGPSSQGKPAYFREEEEEIHSPALLPEAQN) is disordered. S200 is modified (phosphoserine).

Belongs to the lin-28 family. In terms of assembly, monomer. During skeletal muscle differentiation, associated with translation initiation complexes in the polysomal compartment. Directly interacts with EIF3S2. Interacts with NCL in an RNA-dependent manner. Interacts with TUT4 in the presence of pre-let-7 RNA. Expressed in embryonic stem cells (ES cells), spermatagonia and testis. Expressed in numerous epithelial tissues including the epithelia of the small intestine, the intralobular duct epithelium of the mammary gland and the epithelia of Henle's loop in the kidney and in the collecting duct (at protein level). Also expressed in the myocardium and skeletal muscle (at protein level).

Its subcellular location is the cytoplasm. The protein localises to the rough endoplasmic reticulum. It localises to the P-body. The protein resides in the stress granule. It is found in the nucleus. Its subcellular location is the nucleolus. In terms of biological role, RNA-binding protein that inhibits processing of pre-let-7 miRNAs and regulates translation of mRNAs that control developmental timing, pluripotency and metabolism. Seems to recognize a common structural G-quartet (G4) feature in its miRNA and mRNA targets. 'Translational enhancer' that drives specific mRNAs to polysomes and increases the efficiency of protein synthesis. Its association with the translational machinery and target mRNAs results in an increased number of initiation events per molecule of mRNA and, indirectly, in mRNA stabilization. Binds IGF2 mRNA, MYOD1 mRNA, ARBP/36B4 ribosomal protein mRNA and its own mRNA. Essential for skeletal muscle differentiation program through the translational up-regulation of IGF2 expression. Suppressor of microRNA (miRNA) biogenesis, including that of let-7, miR107, miR-143 and miR-200c. Specifically binds the miRNA precursors (pre-miRNAs), recognizing an 5'-GGAG-3' motif found in pre-miRNA terminal loop, and recruits TUT4 and TUT7 uridylyltransferaseS. This results in the terminal uridylation of target pre-miRNAs. Uridylated pre-miRNAs fail to be processed by Dicer and undergo degradation. The repression of let-7 expression is required for normal development and contributes to maintain the pluripotent state by preventing let-7-mediated differentiation of embryonic stem cells. Localized to the periendoplasmic reticulum area, binds to a large number of spliced mRNAs and inhibits the translation of mRNAs destined for the ER, reducing the synthesis of transmembrane proteins, ER or Golgi lumen proteins, and secretory proteins. Binds to and enhances the translation of mRNAs for several metabolic enzymes, such as PFKP, PDHA1 or SDHA, increasing glycolysis and oxidative phosphorylation. Which, with the let-7 repression may enhance tissue repair in adult tissue. The sequence is that of Protein lin-28 homolog A (Lin28a) from Mus musculus (Mouse).